Consider the following 187-residue polypeptide: Adenylate kinase (187 aa).

Gly10–Thr15 contributes to the ATP binding site. Positions Ser30–Val59 are NMP. Residues Thr31, Arg36, Asp57–Val59, Gly85–Arg88, and Gln92 each bind AMP. The segment at Gly126–Asp136 is LID. Residue Arg127 participates in ATP binding. AMP is bound by residues Arg133 and Arg144. An ATP-binding site is contributed by Gly172.

This sequence belongs to the adenylate kinase family. Monomer.

The protein resides in the cytoplasm. The enzyme catalyses AMP + ATP = 2 ADP. It participates in purine metabolism; AMP biosynthesis via salvage pathway; AMP from ADP: step 1/1. Its function is as follows. Catalyzes the reversible transfer of the terminal phosphate group between ATP and AMP. Plays an important role in cellular energy homeostasis and in adenine nucleotide metabolism. The protein is Adenylate kinase of Xanthomonas oryzae pv. oryzae (strain MAFF 311018).